We begin with the raw amino-acid sequence, 487 residues long: Lysophospholipid acyltransferase 5 (487 aa).

A2 carries the N-acetylalanine modification. A run of 6 helical transmembrane segments spans residues 44–64 (LIIS…YLFY), 84–104 (FNFG…FLIL), 111–131 (ITAV…GYYY), 180–200 (GVPS…FLVG), 227–247 (IIPA…YTLL), and 285–305 (VTCW…FNGF). Active-site residues include N338 and H374. The next 3 membrane-spanning stretches (helical) occupy residues 364–384 (GLSL…LVCF), 422–442 (LVQQ…FCLF), and 453–473 (SIYF…PYIH). The Di-lysine motif motif lies at 484 to 487 (KKME).

The protein belongs to the membrane-bound acyltransferase family. As to expression, highly expressed in liver, pancreas and adipose tissue. Very low expression in skeletal muscle and heart. Detected in neutrophils.

The protein resides in the endoplasmic reticulum membrane. The enzyme catalyses a 1-acyl-sn-glycero-3-phosphocholine + an acyl-CoA = a 1,2-diacyl-sn-glycero-3-phosphocholine + CoA. It carries out the reaction a 1-acyl-sn-glycero-3-phosphoethanolamine + an acyl-CoA = a 1,2-diacyl-sn-glycero-3-phosphoethanolamine + CoA. The catalysed reaction is a 1-acyl-sn-glycero-3-phospho-L-serine + an acyl-CoA = a 1,2-diacyl-sn-glycero-3-phospho-L-serine + CoA. It catalyses the reaction (9Z,12Z)-octadecadienoyl-CoA + a 1-acyl-sn-glycero-3-phosphocholine = 1-acyl-2-(9Z,12Z)-octadecadienoyl-sn-glycero-3-phosphocholine + CoA. The enzyme catalyses (5Z,8Z,11Z,14Z)-eicosatetraenoyl-CoA + a 1-acyl-sn-glycero-3-phosphocholine = 1-acyl-2-(5Z,8Z,11Z,14Z-eicosatetraenoyl)-sn-glycero-3-phosphocholine + CoA. It carries out the reaction dodecanoyl-CoA + 1-hexadecanoyl-sn-glycero-3-phosphocholine = 1-hexadecanoyl-2-dodecanoyl-sn-glycero-3-phosphocholine + CoA. The catalysed reaction is octadecanoyl-CoA + 1-hexadecanoyl-sn-glycero-3-phosphocholine = 1-hexadecanoyl-2-octadecanoyl-sn-glycero-3-phosphocholine + CoA. It catalyses the reaction 1-dodecanoyl-sn-glycero-3-phosphocholine + hexadecanoyl-CoA = 1-dodecanoyl-2-hexadecanoyl-sn-glycero-3-phosphocholine + CoA. The enzyme catalyses 1-tetradecanoyl-sn-glycero-3-phosphocholine + hexadecanoyl-CoA = 1-tetradecanoyl-2-hexadecanoyl-sn-glycero-3-phosphocholine + CoA. It carries out the reaction 1-hexadecanoyl-sn-glycero-3-phosphocholine + hexadecanoyl-CoA = 1,2-dihexadecanoyl-sn-glycero-3-phosphocholine + CoA. The catalysed reaction is 1-octadecanoyl-sn-glycero-3-phosphocholine + hexadecanoyl-CoA = 1-octadecanoyl-2-hexadecanoyl-sn-glycero-3-phosphocholine + CoA. It catalyses the reaction 1-(9Z-octadecenoyl)-sn-glycero-3-phosphocholine + hexadecanoyl-CoA = 1-(9Z-octadecenoyl)-2-hexadecanoyl-sn-glycero-3-phosphocholine + CoA. The enzyme catalyses (9Z)-hexadecenoyl-CoA + 1-hexadecanoyl-sn-glycero-3-phosphocholine = 1-hexadecanoyl-2-(9Z-hexadecenoyl)-sn-glycero-3-phosphocholine + CoA. It carries out the reaction 1-hexadecanoyl-sn-glycero-3-phosphocholine + (9Z)-octadecenoyl-CoA = 1-hexadecanoyl-2-(9Z-octadecenoyl)-sn-glycero-3-phosphocholine + CoA. The catalysed reaction is (9Z,12Z)-octadecadienoyl-CoA + 1-hexadecanoyl-sn-glycero-3-phosphocholine = 1-hexadecanoyl-2-(9Z,12Z-octadecadienoyl)-sn-glycero-3-phosphocholine + CoA. It catalyses the reaction 1-dodecanoyl-sn-glycero-3-phosphocholine + (5Z,8Z,11Z,14Z)-eicosatetraenoyl-CoA = 1-dodecanoyl-2-(5Z,8Z,11Z,14Z)-eicosatetraenoyl-sn-glycero-3-phosphocholine + CoA. The enzyme catalyses (5Z,8Z,11Z,14Z)-eicosatetraenoyl-CoA + 1-hexadecanoyl-sn-glycero-3-phosphocholine = 1-hexadecanoyl-2-(5Z,8Z,11Z,14Z-eicosatetraenoyl)-sn-glycero-3-phosphocholine + CoA. It carries out the reaction 1-octadecanoyl-sn-glycero-3-phosphocholine + (5Z,8Z,11Z,14Z)-eicosatetraenoyl-CoA = 1-octadecanoyl-2-(5Z,8Z,11Z,14Z-eicosatetraenoyl)-sn-glycero-3-phosphocholine + CoA. The catalysed reaction is 1-eicosanoyl-sn-glycero-3-phosphocholine + (5Z,8Z,11Z,14Z)-eicosatetraenoyl-CoA = 1-eicosanoyl-2-(5Z,8Z,11Z,14Z)-eicosatetraenoyl-sn-glycero-3-phosphocholine + CoA. It catalyses the reaction 1-(9Z-octadecenoyl)-sn-glycero-3-phosphocholine + (9Z)-octadecenoyl-CoA = 1,2-di-(9Z-octadecenoyl)-sn-glycero-3-phosphocholine + CoA. The enzyme catalyses 1-(9Z-octadecenoyl)-sn-glycero-3-phosphocholine + (9Z,12Z)-octadecadienoyl-CoA = 1-(9Z)-octadecenoyl-2-(9Z,12Z)-octadecadienoyl-sn-glycero-3-phosphocholine + CoA. It carries out the reaction 1-(9Z-octadecenoyl)-sn-glycero-3-phosphocholine + (5Z,8Z,11Z,14Z)-eicosatetraenoyl-CoA = 1-(9Z)-octadecenoyl-2-(5Z,8Z,11Z,14Z)-icosatetraenoyl-sn-glycero-3-phosphocholine + CoA. The catalysed reaction is a 1-acyl-sn-glycero-3-phosphoethanolamine + (9Z,12Z)-octadecadienoyl-CoA = 1-acyl-2-(9Z,12Z)-octadecadienoyl-sn-glycero-3-phosphoethanolamine + CoA. It catalyses the reaction 1-(9Z-octadecenoyl)-sn-glycero-3-phosphoethanolamine + (9Z,12Z)-octadecadienoyl-CoA = 1-(9Z)-octadecenoyl-2-(9Z,12Z)-octadecadienoyl-sn-glycero-3-phosphoethanolamine + CoA. The enzyme catalyses 1-(10Z-heptadecenoyl)-sn-glycero-3-phosphoethanolamine + (9Z,12Z)-octadecadienoyl-CoA = 1-(10Z-heptadecenoyl)-2-(9Z,12Z-octadecadienoyl)-sn-glycero-3-phosphoethanolamine + CoA. It carries out the reaction a 1-acyl-sn-glycero-3-phosphoethanolamine + (5Z,8Z,11Z,14Z)-eicosatetraenoyl-CoA = 1-acyl-2-(5Z,8Z,11Z,14Z)-eicosatetraenoyl-sn-glycero-3-phosphoethanolamine + CoA. The catalysed reaction is 1-hexadecanoyl-sn-glycero-3-phosphoethanolamine + (5Z,8Z,11Z,14Z)-eicosatetraenoyl-CoA = 1-hexadecanoyl-2-(5Z,8Z,11Z,14Z-eicosatetraenoyl)-sn-glycero-3-phosphoethanolamine + CoA. It catalyses the reaction 1-(9Z-octadecenoyl)-sn-glycero-3-phosphoethanolamine + (5Z,8Z,11Z,14Z)-eicosatetraenoyl-CoA = 1-(9Z)-octadecenoyl-2-(5Z,8Z,11Z,14Z)-eicosatetraenoyl-sn-glycero-3-phosphoethanolamine + CoA. The enzyme catalyses 1-(10Z-heptadecenoyl)-sn-glycero-3-phosphoethanolamine + (5Z,8Z,11Z,14Z)-eicosatetraenoyl-CoA = 1-(10Z-heptadecenoyl)-2-(5Z,8Z,11Z,14Z-eicosatetraenoyl)-sn-glycero-3-phosphoethanolamine + CoA. It carries out the reaction a 1-O-(1Z-alkenyl)-sn-glycero-3-phosphoethanolamine + (5Z,8Z,11Z,14Z)-eicosatetraenoyl-CoA = 1-O-(1Z)-alkenyl-2-(5Z,8Z,11Z,14Z)-eicosatetraenoyl-sn-glycero-3-phosphoethanolamine + CoA. The catalysed reaction is a 1-acyl-sn-glycero-3-phospho-L-serine + (9Z,12Z)-octadecadienoyl-CoA = 1-acyl-2-(9Z,12Z-octadecadienoyl)-sn-glycero-3-phospho-L-serine + CoA. It catalyses the reaction a 1-acyl-sn-glycero-3-phospho-L-serine + (5Z,8Z,11Z,14Z)-eicosatetraenoyl-CoA = 1-acyl-2-(5Z,8Z,11Z,14Z-eicosatetraenoyl)-sn-glycero-3-phospho-L-serine + CoA. The enzyme catalyses 1-hexadecanoyl-sn-glycero-3-phospho-L-serine + (9Z)-octadecenoyl-CoA = 1-hexadecanoyl-2-(9Z-octadecenoyl)-sn-glycero-3-phospho-L-serine + CoA. It carries out the reaction 1-(9Z-octadecenoyl)-sn-glycero-3-phospho-L-serine + (9Z)-octadecenoyl-CoA = 1,2-di-(9Z)-octadecenoyl-sn-glycero-3-phospho-L-serine + CoA. The catalysed reaction is 1-hexadecanoyl-sn-glycero-3-phospho-L-serine + (9Z,12Z)-octadecadienoyl-CoA = 1-hexadecanoyl-2-(9Z,12Z-octadecadienoyl)-sn-glycero-3-phospho-L-serine + CoA. It catalyses the reaction 1-(9Z-octadecenoyl)-sn-glycero-3-phospho-L-serine + (9Z,12Z)-octadecadienoyl-CoA = 1-(9Z-octadecenoyl)-2-(9Z,12Z-octadienoyl)-sn-glycero-3-phospho-L-serine + CoA. The enzyme catalyses 1-hexadecanoyl-sn-glycero-3-phospho-L-serine + (5Z,8Z,11Z,14Z)-eicosatetraenoyl-CoA = 1-hexadecanoyl-2-(5Z,8Z,11Z,14Z-eicosatetraenoyl)-sn-glycero-3-phospho-L-serine + CoA. It carries out the reaction 1-(9Z-octadecenoyl)-sn-glycero-3-phospho-L-serine + (5Z,8Z,11Z,14Z)-eicosatetraenoyl-CoA = 1-(9Z-octadecenoyl)-2-(5Z,8Z,11Z,14Z-eicosatetraenoyl)-sn-glycero-3-phospho-L-serine + CoA. Its pathway is lipid metabolism; phospholipid metabolism. With respect to regulation, activity is inhibited by thimerosal. In terms of biological role, lysophospholipid O-acyltransferase (LPLAT) that catalyzes the reacylation step of the phospholipid remodeling process also known as the Lands cycle. Catalyzes transfer of the fatty acyl chain from fatty acyl-CoA to 1-acyl lysophospholipid to form various classes of phospholipids. Converts 1-acyl lysophosphatidylcholine (LPC) into phosphatidylcholine (PC) (LPCAT activity), 1-acyl lysophosphatidylserine (LPS) into phosphatidylserine (PS) (LPSAT activity) and 1-acyl lysophosphatidylethanolamine (LPE) into phosphatidylethanolamine (PE) (LPEAT activity). Favors polyunsaturated fatty acyl-CoAs as acyl donors compared to saturated fatty acyl-CoAs. Has higher activity for LPC acyl acceptors compared to LPEs and LPSs. Can also transfer the fatty acyl chain from fatty acyl-CoA to 1-O-alkyl lysophospholipid or 1-O-alkenyl lysophospholipid with lower efficiency. Acts as a major LPC O-acyltransferase in liver and intestine. As a component of the liver X receptor/NR1H3 or NR1H2 signaling pathway, mainly catalyzes the incorporation of arachidonate into PCs of endoplasmic reticulum (ER) membranes, increasing membrane dynamics and enabling triacylglycerols transfer to nascent very low-density lipoprotein (VLDL) particles. Promotes processing of sterol regulatory protein SREBF1 in hepatocytes, likely by facilitating the translocation of SREBF1-SCAP complex from ER to the Golgi apparatus. Participates in mechanisms by which the liver X receptor/NR1H3 or NR1H2 signaling pathway counteracts lipid-induced ER stress response and inflammation. Down-regulates hepatic inflammation by limiting arachidonic acid availability for synthesis of inflammatory eicosanoids, such as prostaglandins. In enterocytes, acts as a component of a gut-brain feedback loop that coordinates dietary lipid absorption and food intake. Regulates the abundance of PCs containing linoleate and arachidonate in enterocyte membranes, enabling passive diffusion of fatty acids and cholesterol across the membrane for efficient chylomicron assembly. In the intestinal crypt, acts as a component of dietary-responsive phospholipid-cholesterol axis, regulating the biosynthesis of cholesterol and its mitogenic effects on intestinal stem cells. This chain is Lysophospholipid acyltransferase 5 (LPCAT3), found in Homo sapiens (Human).